A 106-amino-acid polypeptide reads, in one-letter code: MRGNIAQLMQQAQKMQENLQKAQEEIAKIEVTGSAGGGMVSVTLTGAKECRKVRIDPSLASDPEMLEDLIAAAFNDASNKIDAESKSKMGSATAGMQLPPGMKLPF.

A disordered region spans residues 81–106 (IDAESKSKMGSATAGMQLPPGMKLPF).

This sequence belongs to the YbaB/EbfC family. In terms of assembly, homodimer.

The protein resides in the cytoplasm. It is found in the nucleoid. Functionally, binds to DNA and alters its conformation. May be involved in regulation of gene expression, nucleoid organization and DNA protection. The sequence is that of Nucleoid-associated protein Smal_0858 from Stenotrophomonas maltophilia (strain R551-3).